Consider the following 89-residue polypeptide: Large ribosomal subunit protein bL27 (89 aa).

The interval 1–24 (MAHKKGTGSTRNGRDSNSKRLGVK) is disordered.

The protein belongs to the bacterial ribosomal protein bL27 family.

The protein is Large ribosomal subunit protein bL27 of Synechococcus sp. (strain WH7803).